The sequence spans 360 residues: Phospho-N-acetylmuramoyl-pentapeptide-transferase (360 aa).

10 helical membrane passes run 24-44 (RAVM…PWTI), 69-89 (GTPT…TLLW), 92-112 (WANP…ALGF), 133-153 (MVWQ…LAAN), 158-178 (ILIV…GFLV), 199-219 (GLAT…AYAS), 239-259 (VVIF…FNAY), 263-283 (VFMG…VAVI), 288-308 (FVLV…MLQV), and 337-357 (QVVV…LSTL).

This sequence belongs to the glycosyltransferase 4 family. MraY subfamily. It depends on Mg(2+) as a cofactor.

It is found in the cell inner membrane. It carries out the reaction UDP-N-acetyl-alpha-D-muramoyl-L-alanyl-gamma-D-glutamyl-meso-2,6-diaminopimeloyl-D-alanyl-D-alanine + di-trans,octa-cis-undecaprenyl phosphate = di-trans,octa-cis-undecaprenyl diphospho-N-acetyl-alpha-D-muramoyl-L-alanyl-D-glutamyl-meso-2,6-diaminopimeloyl-D-alanyl-D-alanine + UMP. The protein operates within cell wall biogenesis; peptidoglycan biosynthesis. Functionally, catalyzes the initial step of the lipid cycle reactions in the biosynthesis of the cell wall peptidoglycan: transfers peptidoglycan precursor phospho-MurNAc-pentapeptide from UDP-MurNAc-pentapeptide onto the lipid carrier undecaprenyl phosphate, yielding undecaprenyl-pyrophosphoryl-MurNAc-pentapeptide, known as lipid I. The protein is Phospho-N-acetylmuramoyl-pentapeptide-transferase of Neisseria meningitidis serogroup A / serotype 4A (strain DSM 15465 / Z2491).